The sequence spans 124 residues: Small ribosomal subunit protein uS12 (124 aa).

Residue aspartate 89 is modified to 3-methylthioaspartic acid.

This sequence belongs to the universal ribosomal protein uS12 family. As to quaternary structure, part of the 30S ribosomal subunit. Contacts proteins S8 and S17. May interact with IF1 in the 30S initiation complex.

With S4 and S5 plays an important role in translational accuracy. In terms of biological role, interacts with and stabilizes bases of the 16S rRNA that are involved in tRNA selection in the A site and with the mRNA backbone. Located at the interface of the 30S and 50S subunits, it traverses the body of the 30S subunit contacting proteins on the other side and probably holding the rRNA structure together. The combined cluster of proteins S8, S12 and S17 appears to hold together the shoulder and platform of the 30S subunit. This Baumannia cicadellinicola subsp. Homalodisca coagulata protein is Small ribosomal subunit protein uS12.